The chain runs to 583 residues: MPRGLELLIAQTILQGFDAQYGRFLEVTSGAQQRFEQADWHAVQQAMKSRIHLYDHHVGLVVEQLRCITDGKSTDADFLLRVKEHYTRLLPDYPRFEIAESFFNSVYCRLFDHRSLTPERLFIFSSQPERRFRTIPRPLAKDFFPDHGWELLLMRILSDLPLRLPWQNKSRDIRYIIAHLTETLGEDALPRCHVQVANELFYRNKAAWLVGKLTTPDGTLPFLLPIHRTDEGELFVDTCLTTTAEASIVFGFARSYFMVYAPLPAALVEWLREILPGKTTAELYMAIGCQKHAKTESYREYLCYLAESDEKFIEAPGIRGMVMLVFTLPGFDRVFKIIKDKFAPQKEMSAAHVRACYQLVKEHDRVGRMADTQEFENFVLDKRQIDPALMALLRQEVPEKITDLGEHIVIRHLYIERRMVPLNIWLEQVEGQQLRDAIEEYGNAIRQLAAANIFPGDMLFKNFGVTRHGRVVFYDYDEICYMTEVNFRDIPPARYPEDELASEPWYSVSPGDVFPEEFRHWLCADPRIGPLFEEMHADLFRADYWRALQTRIKEGHVEDVYAYRRRQRFSVRYGAISSTANSS.

Residues 315–321 and lysine 336 contribute to the ATP site; that span reads APGIRGM. Residue aspartate 371 is part of the active site.

Belongs to the AceK family.

The protein localises to the cytoplasm. The enzyme catalyses L-seryl-[isocitrate dehydrogenase] + ATP = O-phospho-L-seryl-[isocitrate dehydrogenase] + ADP + H(+). Bifunctional enzyme which can phosphorylate or dephosphorylate isocitrate dehydrogenase (IDH) on a specific serine residue. This is a regulatory mechanism which enables bacteria to bypass the Krebs cycle via the glyoxylate shunt in response to the source of carbon. When bacteria are grown on glucose, IDH is fully active and unphosphorylated, but when grown on acetate or ethanol, the activity of IDH declines drastically concomitant with its phosphorylation. The protein is Isocitrate dehydrogenase kinase/phosphatase of Salmonella paratyphi B (strain ATCC BAA-1250 / SPB7).